The following is a 175-amino-acid chain: Large ribosomal subunit protein uL18 (175 aa).

It belongs to the universal ribosomal protein uL18 family. Part of the 50S ribosomal subunit. Contacts the 5S and 23S rRNAs.

Functionally, this is one of the proteins that bind and probably mediate the attachment of the 5S RNA into the large ribosomal subunit, where it forms part of the central protuberance. This chain is Large ribosomal subunit protein uL18, found in Methanospirillum hungatei JF-1 (strain ATCC 27890 / DSM 864 / NBRC 100397 / JF-1).